Consider the following 538-residue polypeptide: Cytochrome P450 monooxygenase astC (538 aa).

A helical membrane pass occupies residues 18-38; the sequence is ALMLPALVGCALLIYRAFFAI. Residue Cys481 coordinates heme.

Belongs to the cytochrome P450 family. The cofactor is heme.

The protein resides in the membrane. It functions in the pathway secondary metabolite biosynthesis; terpenoid biosynthesis. Functionally, cytochrome P450 monooxygenase; part of the gene cluster that mediates the biosynthesis of the sesquiterpenoid aspterric acid (AA), an inhibitor of dihydroxy-acid dehydratase (DHAD) effective as an herbicide. AstC catalyzes the third and last step within the pathway and converts the alpha-epoxy carboxylate intermediate produced by the cytochrome P450 monooxygenase astC from (-)daucane into the tricyclic aspterric acid. This is Cytochrome P450 monooxygenase astC from Aspergillus terreus (strain NIH 2624 / FGSC A1156).